A 365-amino-acid chain; its full sequence is tRNA/tmRNA (uracil-C(5))-methyltransferase (365 aa).

Residues glutamine 189, tyrosine 217, asparagine 222, glutamate 238, and aspartate 298 each contribute to the S-adenosyl-L-methionine site. Cysteine 323 acts as the Nucleophile in catalysis. Glutamate 357 functions as the Proton acceptor in the catalytic mechanism.

The protein belongs to the class I-like SAM-binding methyltransferase superfamily. RNA M5U methyltransferase family. TrmA subfamily.

It carries out the reaction uridine(54) in tRNA + S-adenosyl-L-methionine = 5-methyluridine(54) in tRNA + S-adenosyl-L-homocysteine + H(+). It catalyses the reaction uridine(341) in tmRNA + S-adenosyl-L-methionine = 5-methyluridine(341) in tmRNA + S-adenosyl-L-homocysteine + H(+). Functionally, dual-specificity methyltransferase that catalyzes the formation of 5-methyluridine at position 54 (m5U54) in all tRNAs, and that of position 341 (m5U341) in tmRNA (transfer-mRNA). This Shewanella frigidimarina (strain NCIMB 400) protein is tRNA/tmRNA (uracil-C(5))-methyltransferase.